Reading from the N-terminus, the 132-residue chain is Chaperone protein SycT (132 aa).

As to quaternary structure, binds to YopT.

Functionally, functions as a specific chaperone for YopT. This Yersinia pestis protein is Chaperone protein SycT (sycT).